Here is a 279-residue protein sequence, read N- to C-terminus: MAESFVRLEHVFYKYEDTEKYAVKDVSISAQKGEWVALVGHNGSGKSTIAKLLNGLLFPEDGLIKIGHFVLSEKNIWEIRRQVGMVFQNPDNQFVGATVQDDVAFGLENHGVPHDTMVERVESALNEVGMQSYALHEPARLSGGQKQRVAIAGVLALQPDVIILDEATSMLDPRGRAEVMETIRIMREQEDITVISITHDLDEVLFADRVIVMNKGEIHSEGTPKEIFQQADAMREIGLGVPFIIELQEKLVAGGFETGSTVLSEGALLDQLWKLNSNN.

The 235-residue stretch at 6–240 (VRLEHVFYKY…ADAMREIGLG (235 aa)) folds into the ABC transporter domain. 40–47 (GHNGSGKS) lines the ATP pocket.

It belongs to the ABC transporter superfamily. Energy-coupling factor EcfA family. In terms of assembly, forms a stable energy-coupling factor (ECF) transporter complex composed of 2 membrane-embedded substrate-binding proteins (S component), 2 ATP-binding proteins (A component) and 2 transmembrane proteins (T component).

It localises to the cell membrane. ATP-binding (A) component of a common energy-coupling factor (ECF) ABC-transporter complex. Unlike classic ABC transporters this ECF transporter provides the energy necessary to transport a number of different substrates. The chain is Energy-coupling factor transporter ATP-binding protein EcfA1 from Listeria monocytogenes serovar 1/2a (strain ATCC BAA-679 / EGD-e).